The chain runs to 252 residues: Protein AGAMOUS-LIKE 6 (252 aa).

The MADS-box domain occupies 1–61; that stretch reads MGRGRVELKR…GKLYEFGSAG (61 aa). 2 consecutive short sequence motifs (nuclear localization signal) follow at residues 8-15 and 138-145; these read LKRIENKI and QRKTQIMM. The K-box domain maps to 85–175; sequence TQSWYQEVSK…KIKVSLELSS (91 aa).

In terms of tissue distribution, restricted to flowers.

It is found in the nucleus. Probable transcription factor involved in fruit development. Key regulator of the transition between the state of 'ovary arrest' imposed towards anthesis and the fertilization-triggered fruit set. The sequence is that of Protein AGAMOUS-LIKE 6 from Solanum lycopersicum (Tomato).